We begin with the raw amino-acid sequence, 374 residues long: Putative F-box protein At3g17480 (374 aa).

Residues serine 6 to histidine 52 enclose the F-box domain.

The sequence is that of Putative F-box protein At3g17480 from Arabidopsis thaliana (Mouse-ear cress).